The primary structure comprises 452 residues: Phosphoglucosamine mutase (452 aa).

Catalysis depends on Ser104, which acts as the Phosphoserine intermediate. Positions 104, 245, 247, and 249 each coordinate Mg(2+). Ser104 is subject to Phosphoserine.

It belongs to the phosphohexose mutase family. Mg(2+) serves as cofactor. Activated by phosphorylation.

It carries out the reaction alpha-D-glucosamine 1-phosphate = D-glucosamine 6-phosphate. Its function is as follows. Catalyzes the conversion of glucosamine-6-phosphate to glucosamine-1-phosphate. The chain is Phosphoglucosamine mutase from Gluconacetobacter diazotrophicus (strain ATCC 49037 / DSM 5601 / CCUG 37298 / CIP 103539 / LMG 7603 / PAl5).